Consider the following 261-residue polypeptide: Matrix metalloproteinase-26 (261 aa).

Positions 1–17 (MQLVILRVTIFLPWCFA) are cleaved as a signal peptide. The propeptide occupies 18–89 (VPVPPAADHK…PHCGVPDGSD (72 aa)). Asparagine 64 is a glycosylation site (N-linked (GlcNAc...) asparagine). The Cysteine switch signature appears at 80 to 87 (PHCGVPDG). Positions 82 and 208 each coordinate Zn(2+). Glutamate 209 is an active-site residue. Zn(2+) is bound by residues histidine 212 and histidine 218. N-linked (GlcNAc...) asparagine glycosylation occurs at asparagine 221.

Belongs to the peptidase M10A family. Requires Zn(2+) as cofactor. The cofactor is Ca(2+). Expressed specifically in uterus and placenta. Is also widely expressed in malignant tumors from different sources as well as in diverse tumor cell lines.

It localises to the secreted. The protein localises to the extracellular space. It is found in the extracellular matrix. May hydrolyze collagen type IV, fibronectin, fibrinogen, beta-casein, type I gelatin and alpha-1 proteinase inhibitor. Is also able to activate progelatinase B. This Homo sapiens (Human) protein is Matrix metalloproteinase-26 (MMP26).